A 190-amino-acid polypeptide reads, in one-letter code: dTTP/UTP pyrophosphatase (190 aa).

Asp-68 serves as the catalytic Proton acceptor.

This sequence belongs to the Maf family. YhdE subfamily. A divalent metal cation is required as a cofactor.

It localises to the cytoplasm. It catalyses the reaction dTTP + H2O = dTMP + diphosphate + H(+). It carries out the reaction UTP + H2O = UMP + diphosphate + H(+). In terms of biological role, nucleoside triphosphate pyrophosphatase that hydrolyzes dTTP and UTP. May have a dual role in cell division arrest and in preventing the incorporation of modified nucleotides into cellular nucleic acids. This chain is dTTP/UTP pyrophosphatase, found in Pyrococcus furiosus (strain ATCC 43587 / DSM 3638 / JCM 8422 / Vc1).